Here is a 114-residue protein sequence, read N- to C-terminus: Aspartate 1-decarboxylase (114 aa).

S25 functions as the Schiff-base intermediate with substrate; via pyruvic acid in the catalytic mechanism. Position 25 is a pyruvic acid (Ser) (S25). T57 contacts substrate. Y58 (proton donor) is an active-site residue. Residue 71-73 (GAA) coordinates substrate.

The protein belongs to the PanD family. As to quaternary structure, heterooctamer of four alpha and four beta subunits. The cofactor is pyruvate. Is synthesized initially as an inactive proenzyme, which is activated by self-cleavage at a specific serine bond to produce a beta-subunit with a hydroxyl group at its C-terminus and an alpha-subunit with a pyruvoyl group at its N-terminus.

The protein localises to the cytoplasm. The catalysed reaction is L-aspartate + H(+) = beta-alanine + CO2. Its pathway is cofactor biosynthesis; (R)-pantothenate biosynthesis; beta-alanine from L-aspartate: step 1/1. Functionally, catalyzes the pyruvoyl-dependent decarboxylation of aspartate to produce beta-alanine. The polypeptide is Aspartate 1-decarboxylase (Haloquadratum walsbyi (strain DSM 16790 / HBSQ001)).